A 733-amino-acid polypeptide reads, in one-letter code: 1,4-alpha-glucan branching enzyme GlgB (733 aa).

Asp-413 serves as the catalytic Nucleophile. The Proton donor role is filled by Glu-466.

The protein belongs to the glycosyl hydrolase 13 family. GlgB subfamily. In terms of assembly, monomer.

It carries out the reaction Transfers a segment of a (1-&gt;4)-alpha-D-glucan chain to a primary hydroxy group in a similar glucan chain.. The protein operates within glycan biosynthesis; glycogen biosynthesis. In terms of biological role, catalyzes the formation of the alpha-1,6-glucosidic linkages in glycogen by scission of a 1,4-alpha-linked oligosaccharide from growing alpha-1,4-glucan chains and the subsequent attachment of the oligosaccharide to the alpha-1,6 position. This Leifsonia xyli subsp. xyli (strain CTCB07) protein is 1,4-alpha-glucan branching enzyme GlgB.